A 375-amino-acid polypeptide reads, in one-letter code: DNA replication and repair protein RecF (375 aa).

30 to 37 (GENAQGKT) serves as a coordination point for ATP.

This sequence belongs to the RecF family.

It is found in the cytoplasm. Functionally, the RecF protein is involved in DNA metabolism; it is required for DNA replication and normal SOS inducibility. RecF binds preferentially to single-stranded, linear DNA. It also seems to bind ATP. The chain is DNA replication and repair protein RecF from Bacillus thuringiensis (strain Al Hakam).